The sequence spans 784 residues: Ubiquitin carboxyl-terminal hydrolase 1 (784 aa).

2 disordered regions span residues 1-21 and 33-54; these read MPGVIPSESNGLSRGSPSKKN and TKRALDFTDSQEDEEKASEYRG. Residues 7 to 16 are compositionally biased toward polar residues; it reads SESNGLSRGS. A phosphoserine mark is found at serine 16, serine 42, and serine 67. Residues 81 to 784 form the USP domain; sequence VGLNNLGNTC…TPYLLFYKKL (704 aa). The active-site Nucleophile is cysteine 90. Basic and acidic residues-rich tracts occupy residues 232–243 and 252–264; these read KVEEKSLQKEET and DSTRNLDDLKEQL. Disordered stretches follow at residues 232–341 and 363–411; these read KVEE…KINW and TNQR…SSEA. Over residues 389-407 the composition is skewed to polar residues; that stretch reads NTVNGSGPASPGSSVTPVD. Position 475 is a phosphoserine (serine 475). The active-site Proton acceptor is histidine 593. The tract at residues 686 to 723 is disordered; it reads PEKVVGTPFTDSRNSETNDTNGTQESDRSKESSDQTGI. A compositionally biased stretch (polar residues) spans 694-709; sequence FTDSRNSETNDTNGTQ. Serine 767 is modified (phosphoserine).

It belongs to the peptidase C19 family. Interacts with FANCD2 and PCNA. Interacts with WDR48. Interacts with ATAD5; the interaction regulates USP1-mediated PCNA deubiquitination. In terms of processing, autocatalytic cleavage of USP1 following UV irradiation inactivates it, leading to an increase in ubiquitinated PCNA, recruitment of POLH and translesion synthesis. Ubiquitinated by the CRL2(KLHDC2) complex following autocatalytic cleavage, leading to its degradation: the CRL2(KLHDC2) complex recognizes the diglycine (Gly-Gly) at the C-terminus.

The protein localises to the nucleus. It catalyses the reaction Thiol-dependent hydrolysis of ester, thioester, amide, peptide and isopeptide bonds formed by the C-terminal Gly of ubiquitin (a 76-residue protein attached to proteins as an intracellular targeting signal).. Its function is as follows. Negative regulator of DNA damage repair which specifically deubiquitinates monoubiquitinated FANCD2. Also involved in PCNA-mediated translesion synthesis (TLS) by deubiquitinating monoubiquitinated PCNA. Has almost no deubiquitinating activity by itself and requires the interaction with WDR48 to have a high activity. The sequence is that of Ubiquitin carboxyl-terminal hydrolase 1 from Rattus norvegicus (Rat).